A 245-amino-acid polypeptide reads, in one-letter code: 1-(5-phosphoribosyl)-5-[(5-phosphoribosylamino)methylideneamino] imidazole-4-carboxamide isomerase (245 aa).

Asp-7 serves as the catalytic Proton acceptor. Asp-129 (proton donor) is an active-site residue.

This sequence belongs to the HisA/HisF family.

It localises to the cytoplasm. It catalyses the reaction 1-(5-phospho-beta-D-ribosyl)-5-[(5-phospho-beta-D-ribosylamino)methylideneamino]imidazole-4-carboxamide = 5-[(5-phospho-1-deoxy-D-ribulos-1-ylimino)methylamino]-1-(5-phospho-beta-D-ribosyl)imidazole-4-carboxamide. It functions in the pathway amino-acid biosynthesis; L-histidine biosynthesis; L-histidine from 5-phospho-alpha-D-ribose 1-diphosphate: step 4/9. This Klebsiella pneumoniae subsp. pneumoniae (strain ATCC 700721 / MGH 78578) protein is 1-(5-phosphoribosyl)-5-[(5-phosphoribosylamino)methylideneamino] imidazole-4-carboxamide isomerase.